Consider the following 335-residue polypeptide: uncharacterized protein (335 aa).

Transmembrane regions (helical) follow at residues 104–124 (FKKV…MGLL), 128–148 (LLQG…LSLF), 280–300 (LAFG…TMIG), and 310–330 (TINL…GIFV).

It localises to the cell membrane. This is an uncharacterized protein from Methanocaldococcus jannaschii (strain ATCC 43067 / DSM 2661 / JAL-1 / JCM 10045 / NBRC 100440) (Methanococcus jannaschii).